Here is a 340-residue protein sequence, read N- to C-terminus: uncharacterized protein (340 aa).

The first 20 residues, Met1 to Ala20, serve as a signal peptide directing secretion.

This is an uncharacterized protein from Mycobacterium tuberculosis (strain CDC 1551 / Oshkosh).